The following is a 192-amino-acid chain: Protein Syd (192 aa).

Belongs to the Syd family.

Its subcellular location is the cell inner membrane. Functionally, interacts with the SecY protein in vivo. May bind preferentially to an uncomplexed state of SecY, thus functioning either as a chelating agent for excess SecY in the cell or as a regulatory factor that negatively controls the translocase function. This is Protein Syd from Hahella chejuensis (strain KCTC 2396).